The primary structure comprises 378 residues: Protein RecA (378 aa).

79–86 lines the ATP pocket; that stretch reads GPESSGKT.

This sequence belongs to the RecA family.

The protein localises to the cytoplasm. Its function is as follows. Can catalyze the hydrolysis of ATP in the presence of single-stranded DNA, the ATP-dependent uptake of single-stranded DNA by duplex DNA, and the ATP-dependent hybridization of homologous single-stranded DNAs. It interacts with LexA causing its activation and leading to its autocatalytic cleavage. The sequence is that of Protein RecA from Streptococcus pyogenes serotype M49 (strain NZ131).